The following is a 901-amino-acid chain: HTH-type transcriptional regulator MalT (901 aa).

39 to 46 (SPAGYGKT) lines the ATP pocket. The HTH luxR-type domain occupies 829 to 894 (ELIRTSPLTQ…DAVQHAQQLL (66 aa)). Residues 853-872 (NEQIAGELAVAATTIKTHIR) constitute a DNA-binding region (H-T-H motif).

It belongs to the MalT family. Monomer in solution. Oligomerizes to an active state in the presence of the positive effectors ATP and maltotriose.

Activated by ATP and maltotriose, which are both required for DNA binding. In terms of biological role, positively regulates the transcription of the maltose regulon whose gene products are responsible for uptake and catabolism of malto-oligosaccharides. Specifically binds to the promoter region of its target genes, recognizing a short DNA motif called the MalT box. The polypeptide is HTH-type transcriptional regulator MalT (Salmonella gallinarum (strain 287/91 / NCTC 13346)).